Consider the following 648-residue polypeptide: MTALLELCNVSRSYPSGEEQVAVLKDISLQIHAGEMVAIVGVSGSGKSTLMNILGCLDKPTSGTYRVAGRDVSTLDPDALAQLRREHFGFIFQRYHLLSHLTAAQNVEIPAVYAGIERKKRQARARELLLRLGLSDRVDYPPSQLSGGQQQRVSIARALMNGGQVILADEPTGALDSHSGEEVMAILRQLRDRGHTVIIVTHDPLIAAQAERIIEIHDGKIVHNPPAQEKKREQGVDAAVVNTAPGWRQFASSFREALSMAWLAMAANKMRTLLTMLGIIIGIASVVSIVVVGDAAKQMVLADIRAMGTNTIDIHPGKDFGDDNPQYRQALKYDDLVAIQKQPWVNSATPSVSKSLRLRYGNIDIAVNANGVSGDYFNVYGMSFREGNTFNAVQQQDRAQVVVLDANTRRQLFPNKANVVGEVVLVGNMPVIVIGVAEEKPSMYGNSNLLQVWLPYSTMSDRIMGQSWLNSITVRVKDGVDSDQAEQQLTRLLTLRHGKKDFFTWNMDSVLKTAEKTTYTLQLFLTLVAVISLVVGGIGVMNIMLVSVTERTREIGIRMAVGARASDVLQQFLIEAVLVCLVGGALGISLSMFIAFMLQLFLPGWEIGFSLTALASAFLCSTFTGILFGWLPARNAARLDPVDALARE.

Positions 5-243 (LELCNVSRSY…QGVDAAVVNT (239 aa)) constitute an ABC transporter domain. 41–48 (GVSGSGKS) is an ATP binding site. 5 helical membrane passes run 273–293 (LLTMLGIIIGIASVVSIVVVG), 417–437 (ANVVGEVVLVGNMPVIVIGVA), 523–543 (LFLTLVAVISLVVGGIGVMNI), 577–597 (VLVCLVGGALGISLSMFIAFM), and 611–631 (LTALASAFLCSTFTGILFGWL).

The protein belongs to the ABC transporter superfamily. Macrolide exporter (TC 3.A.1.122) family. Homodimer. Part of the tripartite efflux system MacAB-TolC, which is composed of an inner membrane transporter, MacB, a periplasmic membrane fusion protein, MacA, and an outer membrane component, TolC. The complex forms a large protein conduit and can translocate molecules across both the inner and outer membranes. Interacts with MacA.

The protein localises to the cell inner membrane. Functionally, part of the tripartite efflux system MacAB-TolC. MacB is a non-canonical ABC transporter that contains transmembrane domains (TMD), which form a pore in the inner membrane, and an ATP-binding domain (NBD), which is responsible for energy generation. Confers resistance against macrolides. This is Macrolide export ATP-binding/permease protein MacB from Salmonella typhi.